Consider the following 765-residue polypeptide: Palmitoyltransferase ZDHHC8 (765 aa).

At 1 to 13 the chain is on the cytoplasmic side; sequence MPRSPGTRLKPAK. Residues 14–34 form a helical membrane-spanning segment; that stretch reads YIPVATAAALLVGSSTLFFVF. Residues 35-52 lie on the Lumenal side of the membrane; sequence TCPWLTRAVSPAVPVYNG. Residues 53–73 form a helical membrane-spanning segment; the sequence is IIFLFVLANFSMATFMDPGVF. At 74–148 the chain is on the cytoplasmic side; that stretch reads PRADEDEDKE…NCIGRRNYRY (75 aa). One can recognise a DHHC domain in the interval 104–154; it reads KWCATCHFYRPPRCSHCSVCDNCVEDFDHHCPWVNNCIGRRNYRYFFLFLL. Cys134 (S-palmitoyl cysteine intermediate) is an active-site residue. A helical membrane pass occupies residues 149–169; it reads FFLFLLSLSAHMVGVVAFGLV. At 170–190 the chain is on the lumenal side; it reads YVLNHAEGLGAAHTTITMAVM. Residues 191-211 form a helical membrane-spanning segment; the sequence is CVAGLFFIPVIGLTGFHVVLV. The Cytoplasmic portion of the chain corresponds to 212–765; that stretch reads TRGRTTNEHV…VGGTTYEISV (554 aa). Residues 290-386 are disordered; that stretch reads LKAGLGRSKS…PGPDSLTLGE (97 aa). Over residues 301–311 the composition is skewed to basic and acidic residues; sequence GSLDRLDEKPL. Positions 333-348 are enriched in polar residues; that stretch reads PRPSSAESALSAQRTS. Ser337 is modified (phosphoserine). Omega-N-methylarginine is present on Arg441. The tract at residues 447-542 is disordered; that stretch reads ALQPLRSEGG…PREPSPVRYD (96 aa). 2 positions are modified to phosphoserine: Ser606 and Ser627. Residues 630-747 form a disordered region; it reads SLSSAVSRAP…PGPSASPARH (118 aa). Over residues 639–655 the composition is skewed to polar residues; that stretch reads PRTSSSSLQADLANNNA. The segment covering 671-680 has biased composition (pro residues); it reads QGPPSPPSTP. Phosphoserine occurs at positions 675, 682, 725, and 743.

The protein belongs to the DHHC palmitoyltransferase family. ERF2/ZDHHC9 subfamily.

It localises to the golgi apparatus membrane. It is found in the mitochondrion membrane. The enzyme catalyses L-cysteinyl-[protein] + hexadecanoyl-CoA = S-hexadecanoyl-L-cysteinyl-[protein] + CoA. Palmitoyltransferase that catalyzes the addition of palmitate onto various protein substrates and therefore functions in several unrelated biological processes. Through the palmitoylation of ABCA1 regulates the localization of the transporter to the plasma membrane and thereby regulates its function in cholesterol and phospholipid efflux. Could also pamitoylate the D(2) dopamine receptor DRD2 and regulate its stability and localization to the plasma membrane. Could also play a role in glutamatergic transmission. This is Palmitoyltransferase ZDHHC8 from Canis lupus familiaris (Dog).